The primary structure comprises 647 residues: Transcriptional repressor XBP1 (647 aa).

Composition is skewed to polar residues over residues 138–148 and 156–170; these read SNKTPVSASPT and STAS…LTKN. 2 disordered regions span residues 138-170 and 264-295; these read SNKT…LTKN and LLSS…STSS. Positions 264-282 are enriched in low complexity; that stretch reads LLSSSTSSPPKRRTSTGST. Positions 282–395 constitute an HTH APSES-type domain; that stretch reads TFLDANASSS…PDFPKDCESW (114 aa). The H-T-H motif DNA-binding region spans 318–339; that stretch reads CQSYKDFLINELGPDQIDLPNL. A compositionally biased stretch (low complexity) spans 425 to 434; the sequence is TNFTSTAVAR. Disordered stretches follow at residues 425 to 455, 485 to 508, and 612 to 647; these read TNFT…HSKA, KKNS…GPRD, and QNQR…NSKQ. Residues 435-445 are compositionally biased toward basic residues; it reads PRQKPRPRPRQ. Residues 493–502 are compositionally biased toward low complexity; the sequence is SSTYTSQTSS.

Its subcellular location is the nucleus. In terms of biological role, transcriptional repressor which binds to the consensus sequence 5'-GCCTCGA[G/A]G[C/A]-3'. Represses CLN1 transcription. This chain is Transcriptional repressor XBP1 (XBP1), found in Saccharomyces cerevisiae (strain ATCC 204508 / S288c) (Baker's yeast).